Here is a 259-residue protein sequence, read N- to C-terminus: Ribonuclease PH (259 aa).

Phosphate contacts are provided by residues Arg-88 and 126-128 (GTR).

It belongs to the RNase PH family. In terms of assembly, homohexameric ring arranged as a trimer of dimers.

It carries out the reaction tRNA(n+1) + phosphate = tRNA(n) + a ribonucleoside 5'-diphosphate. In terms of biological role, phosphorolytic 3'-5' exoribonuclease that plays an important role in tRNA 3'-end maturation. Removes nucleotide residues following the 3'-CCA terminus of tRNAs; can also add nucleotides to the ends of RNA molecules by using nucleoside diphosphates as substrates, but this may not be physiologically important. Probably plays a role in initiation of 16S rRNA degradation (leading to ribosome degradation) during starvation. This Mycobacterium avium (strain 104) protein is Ribonuclease PH.